A 461-amino-acid polypeptide reads, in one-letter code: Probable ornithine decarboxylase (461 aa).

The interval 1–35 is disordered; that stretch reads MTGTKRNGEEVVNENNNNNVAEETNKKAKVDESST. Residues 13–22 are compositionally biased toward low complexity; it reads NENNNNNVAE. A compositionally biased stretch (basic and acidic residues) spans 23–32; sequence ETNKKAKVDE. At K116 the chain carries N6-(pyridoxal phosphate)lysine. Pyridoxal 5'-phosphate-binding positions include S247, G284, and 317-320; that span reads EPGR. Substrate is bound at residue 375 to 376; sequence FD. The active-site Proton donor; shared with dimeric partner is the C402. Residue D403 participates in substrate binding. Residue Y431 participates in pyridoxal 5'-phosphate binding.

Belongs to the Orn/Lys/Arg decarboxylase class-II family. As to quaternary structure, homodimer. Only the dimer is catalytically active, as the active sites are constructed of residues from both monomers. The cofactor is pyridoxal 5'-phosphate.

The catalysed reaction is L-ornithine + H(+) = putrescine + CO2. It functions in the pathway amine and polyamine biosynthesis; putrescine biosynthesis via L-ornithine pathway; putrescine from L-ornithine: step 1/1. Inhibited by antizyme (AZ) in response to polyamine levels. AZ inhibits the assembly of the functional homodimer by binding to ODC monomers and targeting them for ubiquitin-independent proteolytic destruction by the 26S proteasome. Catalyzes the first and rate-limiting step of polyamine biosynthesis that converts ornithine into putrescine, which is the precursor for the polyamines, spermidine and spermine. Polyamines are essential for cell proliferation and are implicated in cellular processes, ranging from DNA replication to apoptosis. This chain is Probable ornithine decarboxylase (odc), found in Dictyostelium discoideum (Social amoeba).